Here is a 218-residue protein sequence, read N- to C-terminus: Ribose-5-phosphate isomerase A (218 aa).

Substrate contacts are provided by residues 28–31 (TGST), 81–84 (DGAD), and 94–97 (KGGG). The active-site Proton acceptor is E103. K121 lines the substrate pocket.

The protein belongs to the ribose 5-phosphate isomerase family. As to quaternary structure, homodimer.

It carries out the reaction aldehydo-D-ribose 5-phosphate = D-ribulose 5-phosphate. Its pathway is carbohydrate degradation; pentose phosphate pathway; D-ribose 5-phosphate from D-ribulose 5-phosphate (non-oxidative stage): step 1/1. Its function is as follows. Catalyzes the reversible conversion of ribose-5-phosphate to ribulose 5-phosphate. The polypeptide is Ribose-5-phosphate isomerase A (Proteus mirabilis (strain HI4320)).